Consider the following 281-residue polypeptide: Polyamine aminopropyltransferase (281 aa).

The region spanning 2–237 is the PABS domain; sequence EIWYTEKLEL…GIIGFTFLSN (236 aa). Glutamine 33 contacts S-methyl-5'-thioadenosine. 2 residues coordinate spermidine: histidine 64 and aspartate 88. S-methyl-5'-thioadenosine is bound by residues glutamate 108 and 139-140; that span reads DG. Aspartate 157 acts as the Proton acceptor in catalysis. 157-160 provides a ligand contact to spermidine; that stretch reads DSSD. Proline 164 contributes to the S-methyl-5'-thioadenosine binding site.

It belongs to the spermidine/spermine synthase family. Homodimer or homotetramer.

The protein localises to the cytoplasm. The catalysed reaction is S-adenosyl 3-(methylsulfanyl)propylamine + putrescine = S-methyl-5'-thioadenosine + spermidine + H(+). It participates in amine and polyamine biosynthesis; spermidine biosynthesis; spermidine from putrescine: step 1/1. Catalyzes the irreversible transfer of a propylamine group from the amino donor S-adenosylmethioninamine (decarboxy-AdoMet) to putrescine (1,4-diaminobutane) to yield spermidine. The chain is Polyamine aminopropyltransferase from Leptospira biflexa serovar Patoc (strain Patoc 1 / Ames).